The chain runs to 526 residues: Peptide chain release factor 3 (526 aa).

Positions 11 to 277 (SKRRTFAIIS…SLIKWAPSPL (267 aa)) constitute a tr-type G domain. Residues 20 to 27 (SHPDAGKT), 88 to 92 (DTPGH), and 142 to 145 (NKLD) contribute to the GTP site.

The protein belongs to the TRAFAC class translation factor GTPase superfamily. Classic translation factor GTPase family. PrfC subfamily.

Its subcellular location is the cytoplasm. In terms of biological role, increases the formation of ribosomal termination complexes and stimulates activities of RF-1 and RF-2. It binds guanine nucleotides and has strong preference for UGA stop codons. It may interact directly with the ribosome. The stimulation of RF-1 and RF-2 is significantly reduced by GTP and GDP, but not by GMP. This Buchnera aphidicola subsp. Acyrthosiphon pisum (strain Tuc7) protein is Peptide chain release factor 3.